Consider the following 154-residue polypeptide: Superoxide dismutase [Cu-Zn] 1 (154 aa).

Cu cation contacts are provided by His47, His49, and His64. Cys58 and Cys147 are joined by a disulfide. Zn(2+)-binding residues include His64, His72, His81, and Asp84. His121 serves as a coordination point for Cu cation. Residue Arg144 participates in substrate binding.

It belongs to the Cu-Zn superoxide dismutase family. In terms of assembly, homodimer. The cofactor is Cu cation. Zn(2+) serves as cofactor.

It localises to the cytoplasm. It catalyses the reaction 2 superoxide + 2 H(+) = H2O2 + O2. Functionally, destroys radicals which are normally produced within the cells and which are toxic to biological systems. This is Superoxide dismutase [Cu-Zn] 1 (SOD1) from Debaryomyces hansenii (strain ATCC 36239 / CBS 767 / BCRC 21394 / JCM 1990 / NBRC 0083 / IGC 2968) (Yeast).